The chain runs to 363 residues: Fructose-bisphosphate aldolase C (363 aa).

Substrate-binding residues include Arg56 and Lys147. The active-site Schiff-base intermediate with dihydroxyacetone-P is the Lys230.

Belongs to the class I fructose-bisphosphate aldolase family. Homotetramer. Expressed in brain but not in liver or muscle.

It carries out the reaction beta-D-fructose 1,6-bisphosphate = D-glyceraldehyde 3-phosphate + dihydroxyacetone phosphate. It functions in the pathway carbohydrate degradation; glycolysis; D-glyceraldehyde 3-phosphate and glycerone phosphate from D-glucose: step 4/4. In Carassius auratus (Goldfish), this protein is Fructose-bisphosphate aldolase C (aldoc).